The primary structure comprises 432 residues: Adenosine 3'-phospho 5'-phosphosulfate transporter 1 (432 aa).

Helical transmembrane passes span Trp5–Glu25, Val40–Phe60, Ala109–Leu129, Phe154–Cys174, Trp238–Gly258, Pro265–Thr285, Ser299–Leu319, Leu353–Leu373, and Gly387–Leu407. Ser427 carries the phosphoserine modification.

The protein belongs to the nucleotide-sugar transporter family. SLC35B subfamily.

The protein resides in the golgi apparatus membrane. It catalyses the reaction 3'-phosphoadenylyl sulfate(in) + adenosine 3',5'-bisphosphate(out) = 3'-phosphoadenylyl sulfate(out) + adenosine 3',5'-bisphosphate(in). Functionally, probably functions as a 3'-phosphoadenylyl sulfate:adenosine 3',5'-bisphosphate antiporter at the Golgi membranes. Mediates the transport from the cytosol into the lumen of the Golgi of 3'-phosphoadenylyl sulfate/adenosine 3'-phospho 5'-phosphosulfate (PAPS), a universal sulfuryl donor for sulfation events that take place in that compartment. The polypeptide is Adenosine 3'-phospho 5'-phosphosulfate transporter 1 (Pongo abelii (Sumatran orangutan)).